We begin with the raw amino-acid sequence, 391 residues long: NAD(P)H-quinone oxidoreductase subunit H, chloroplastic (391 aa).

The protein belongs to the complex I 49 kDa subunit family. NDH is composed of at least 16 different subunits, 5 of which are encoded in the nucleus.

It localises to the plastid. It is found in the chloroplast thylakoid membrane. It catalyses the reaction a plastoquinone + NADH + (n+1) H(+)(in) = a plastoquinol + NAD(+) + n H(+)(out). It carries out the reaction a plastoquinone + NADPH + (n+1) H(+)(in) = a plastoquinol + NADP(+) + n H(+)(out). NDH shuttles electrons from NAD(P)H:plastoquinone, via FMN and iron-sulfur (Fe-S) centers, to quinones in the photosynthetic chain and possibly in a chloroplast respiratory chain. The immediate electron acceptor for the enzyme in this species is believed to be plastoquinone. Couples the redox reaction to proton translocation, and thus conserves the redox energy in a proton gradient. This is NAD(P)H-quinone oxidoreductase subunit H, chloroplastic from Chaetosphaeridium globosum (Charophycean green alga).